The following is a 94-amino-acid chain: Small ribosomal subunit protein bS6 (94 aa).

This sequence belongs to the bacterial ribosomal protein bS6 family.

In terms of biological role, binds together with bS18 to 16S ribosomal RNA. This chain is Small ribosomal subunit protein bS6, found in Clostridium botulinum (strain Hall / ATCC 3502 / NCTC 13319 / Type A).